A 297-amino-acid chain; its full sequence is Bifunctional protein FolD (297 aa).

NADP(+) is bound by residues 167 to 169 (GRS) and isoleucine 233.

This sequence belongs to the tetrahydrofolate dehydrogenase/cyclohydrolase family. As to quaternary structure, homodimer.

The enzyme catalyses (6R)-5,10-methylene-5,6,7,8-tetrahydrofolate + NADP(+) = (6R)-5,10-methenyltetrahydrofolate + NADPH. It carries out the reaction (6R)-5,10-methenyltetrahydrofolate + H2O = (6R)-10-formyltetrahydrofolate + H(+). It functions in the pathway one-carbon metabolism; tetrahydrofolate interconversion. Catalyzes the oxidation of 5,10-methylenetetrahydrofolate to 5,10-methenyltetrahydrofolate and then the hydrolysis of 5,10-methenyltetrahydrofolate to 10-formyltetrahydrofolate. This Zymomonas mobilis subsp. mobilis (strain ATCC 31821 / ZM4 / CP4) protein is Bifunctional protein FolD.